The following is a 226-amino-acid chain: Thiamine-phosphate synthase (226 aa).

Residues 46–50 and aspartate 83 contribute to the 4-amino-2-methyl-5-(diphosphooxymethyl)pyrimidine site; that span reads QFRDK. Residues aspartate 84 and aspartate 103 each contribute to the Mg(2+) site. Serine 122 contributes to the 4-amino-2-methyl-5-(diphosphooxymethyl)pyrimidine binding site. 149 to 151 serves as a coordination point for 2-[(2R,5Z)-2-carboxy-4-methylthiazol-5(2H)-ylidene]ethyl phosphate; that stretch reads TQS. A 4-amino-2-methyl-5-(diphosphooxymethyl)pyrimidine-binding site is contributed by lysine 152. Residues glycine 181 and 201–202 each bind 2-[(2R,5Z)-2-carboxy-4-methylthiazol-5(2H)-ylidene]ethyl phosphate; that span reads IT.

This sequence belongs to the thiamine-phosphate synthase family. Mg(2+) serves as cofactor.

It catalyses the reaction 2-[(2R,5Z)-2-carboxy-4-methylthiazol-5(2H)-ylidene]ethyl phosphate + 4-amino-2-methyl-5-(diphosphooxymethyl)pyrimidine + 2 H(+) = thiamine phosphate + CO2 + diphosphate. The enzyme catalyses 2-(2-carboxy-4-methylthiazol-5-yl)ethyl phosphate + 4-amino-2-methyl-5-(diphosphooxymethyl)pyrimidine + 2 H(+) = thiamine phosphate + CO2 + diphosphate. It carries out the reaction 4-methyl-5-(2-phosphooxyethyl)-thiazole + 4-amino-2-methyl-5-(diphosphooxymethyl)pyrimidine + H(+) = thiamine phosphate + diphosphate. It participates in cofactor biosynthesis; thiamine diphosphate biosynthesis; thiamine phosphate from 4-amino-2-methyl-5-diphosphomethylpyrimidine and 4-methyl-5-(2-phosphoethyl)-thiazole: step 1/1. In terms of biological role, condenses 4-methyl-5-(beta-hydroxyethyl)thiazole monophosphate (THZ-P) and 2-methyl-4-amino-5-hydroxymethyl pyrimidine pyrophosphate (HMP-PP) to form thiamine monophosphate (TMP). In Haemophilus influenzae (strain PittGG), this protein is Thiamine-phosphate synthase.